A 319-amino-acid chain; its full sequence is Olfactory receptor 8U8 (319 aa).

Over 1–28 the chain is Extracellular; the sequence is MAHINCTQATEFILVGLTDHQELKMPLF. A glycan (N-linked (GlcNAc...) asparagine) is linked at Asn5. The chain crosses the membrane as a helical span at residues 29-49; sequence VLFLSIYLFTVVGNLGLILLI. The Cytoplasmic portion of the chain corresponds to 50 to 56; sequence RADTSLN. The chain crosses the membrane as a helical span at residues 57–77; sequence TPMYFFLSNLAFVDFCYSSVI. The Extracellular portion of the chain corresponds to 78–97; it reads TPKMLGNFLYKQNVISFDAC. Cys97 and Cys179 are oxidised to a cystine. Residues 98-118 form a helical membrane-spanning segment; sequence ATQLGCFLTFMVSESLLLASM. The Cytoplasmic segment spans residues 119–122; that stretch reads AYDR. The chain crosses the membrane as a helical span at residues 123–143; that stretch reads YVAICNPLLYMVVMTPGICIQ. Over 144-204 the chain is Extracellular; that stretch reads LVAVPYSYSF…KQLWILACAG (61 aa). A helical transmembrane segment spans residues 205–225; the sequence is ITFICSVLIVFVSYMFIIFAI. Topologically, residues 226–239 are cytoplasmic; it reads LRMSSAEGRRKAFS. Residues 240-260 form a helical membrane-spanning segment; the sequence is TCSSHMLAVTIFYGTLIFMYL. Topologically, residues 261–271 are extracellular; that stretch reads QPSSSHSLDAD. A helical transmembrane segment spans residues 272-292; that stretch reads KMASVFYTVIIPMLNPLIYSL. Topologically, residues 293–319 are cytoplasmic; it reads RNKDVKDALKKVIINRNHAFIFLKLRK.

Belongs to the G-protein coupled receptor 1 family.

The protein localises to the cell membrane. Odorant receptor. The chain is Olfactory receptor 8U8 (OR8U8) from Homo sapiens (Human).